Consider the following 143-residue polypeptide: FAM161 homolog famh-136 (143 aa).

It belongs to the FAM136 family.

Its subcellular location is the cytoplasm. Its function is as follows. May play a role in locomotion and behavior. In Caenorhabditis elegans, this protein is FAM161 homolog famh-136.